The chain runs to 336 residues: Glycerol-3-phosphate dehydrogenase [NAD(P)+] (336 aa).

Residues serine 11, tryptophan 12, arginine 32, and lysine 106 each contribute to the NADPH site. 2 residues coordinate sn-glycerol 3-phosphate: lysine 106 and glycine 136. NADPH is bound at residue alanine 140. Lysine 191, aspartate 244, serine 254, arginine 255, and asparagine 256 together coordinate sn-glycerol 3-phosphate. Catalysis depends on lysine 191, which acts as the Proton acceptor. An NADPH-binding site is contributed by arginine 255. NADPH is bound by residues valine 279 and glutamate 281.

This sequence belongs to the NAD-dependent glycerol-3-phosphate dehydrogenase family.

It is found in the cytoplasm. The enzyme catalyses sn-glycerol 3-phosphate + NAD(+) = dihydroxyacetone phosphate + NADH + H(+). It carries out the reaction sn-glycerol 3-phosphate + NADP(+) = dihydroxyacetone phosphate + NADPH + H(+). It functions in the pathway membrane lipid metabolism; glycerophospholipid metabolism. Its function is as follows. Catalyzes the reduction of the glycolytic intermediate dihydroxyacetone phosphate (DHAP) to sn-glycerol 3-phosphate (G3P), the key precursor for phospholipid synthesis. In Frankia casuarinae (strain DSM 45818 / CECT 9043 / HFP020203 / CcI3), this protein is Glycerol-3-phosphate dehydrogenase [NAD(P)+].